Here is a 289-residue protein sequence, read N- to C-terminus: Rhomboid-type serine protease 2 (289 aa).

6 helical membrane passes run 26-46, 67-87, 100-120, 122-142, 157-179, and 184-203; these read VVII…VDIQ, FPFI…LTPL, CLAL…IGLE, FVFG…LLLG, IGTY…AVLV, and FWGH…SSTL. Ser-134 serves as the catalytic Nucleophile. His-187 is an active-site residue.

The protein belongs to the peptidase S54 family.

It is found in the golgi apparatus membrane. Its subcellular location is the golgi apparatus. The protein localises to the cis-Golgi network membrane. The catalysed reaction is Cleaves type-1 transmembrane domains using a catalytic dyad composed of serine and histidine that are contributed by different transmembrane domains.. Its function is as follows. Probable rhomboid-type serine protease that catalyzes intramembrane proteolysis. The sequence is that of Rhomboid-type serine protease 2 (RBD2) from Podospora anserina (Pleurage anserina).